A 136-amino-acid polypeptide reads, in one-letter code: Probable glycine cleavage system H protein 3 (136 aa).

One can recognise a Lipoyl-binding domain in the interval 28-109 (MVTVGITSLG…PYDAWIVKIK (82 aa)). Lysine 69 is modified (N6-lipoyllysine).

It belongs to the GcvH family. The glycine cleavage system is composed of four proteins: P, T, L and H. It depends on (R)-lipoate as a cofactor.

In terms of biological role, the glycine cleavage system catalyzes the degradation of glycine. The H protein shuttles the methylamine group of glycine from the P protein to the T protein. This chain is Probable glycine cleavage system H protein 3, found in Sulfurisphaera tokodaii (strain DSM 16993 / JCM 10545 / NBRC 100140 / 7) (Sulfolobus tokodaii).